The primary structure comprises 268 residues: Shikimate dehydrogenase (NADP(+)) (268 aa).

Residues 14 to 16 and Thr61 contribute to the shikimate site; that span reads SKS. Catalysis depends on Lys65, which acts as the Proton acceptor. Asn86 and Asp102 together coordinate shikimate. Residues 126 to 130, 149 to 154, and Met213 contribute to the NADP(+) site; these read GAGGA and NRTFLK. Shikimate is bound at residue Tyr215. NADP(+) is bound at residue Gly238.

This sequence belongs to the shikimate dehydrogenase family. As to quaternary structure, homodimer.

The enzyme catalyses shikimate + NADP(+) = 3-dehydroshikimate + NADPH + H(+). It functions in the pathway metabolic intermediate biosynthesis; chorismate biosynthesis; chorismate from D-erythrose 4-phosphate and phosphoenolpyruvate: step 4/7. Its function is as follows. Involved in the biosynthesis of the chorismate, which leads to the biosynthesis of aromatic amino acids. Catalyzes the reversible NADPH linked reduction of 3-dehydroshikimate (DHSA) to yield shikimate (SA). This chain is Shikimate dehydrogenase (NADP(+)), found in Haemophilus influenzae (strain PittGG).